We begin with the raw amino-acid sequence, 70 residues long: Cold shock-like protein CspI (70 aa).

Residues 7–67 enclose the CSD domain; the sequence is GLVKWFNPEK…GPKGPAAVHV (61 aa).

The protein resides in the cytoplasm. The chain is Cold shock-like protein CspI (cspI) from Escherichia coli O6:H1 (strain CFT073 / ATCC 700928 / UPEC).